Reading from the N-terminus, the 502-residue chain is Lysine--tRNA ligase (502 aa).

Residues Glu413 and Glu420 each contribute to the Mg(2+) site.

It belongs to the class-II aminoacyl-tRNA synthetase family. Homodimer. Requires Mg(2+) as cofactor.

It localises to the cytoplasm. The enzyme catalyses tRNA(Lys) + L-lysine + ATP = L-lysyl-tRNA(Lys) + AMP + diphosphate. This Haemophilus influenzae (strain PittGG) protein is Lysine--tRNA ligase.